We begin with the raw amino-acid sequence, 807 residues long: Phenylalanine--tRNA ligase beta subunit (807 aa).

Residues serine 39–alanine 153 enclose the tRNA-binding domain. The B5 domain occupies alanine 407 to alanine 491. Positions 469, 475, 478, and 479 each coordinate Mg(2+). The FDX-ACB domain maps to proline 713–arginine 806.

It belongs to the phenylalanyl-tRNA synthetase beta subunit family. Type 1 subfamily. As to quaternary structure, tetramer of two alpha and two beta subunits. It depends on Mg(2+) as a cofactor.

It is found in the cytoplasm. It carries out the reaction tRNA(Phe) + L-phenylalanine + ATP = L-phenylalanyl-tRNA(Phe) + AMP + diphosphate + H(+). This chain is Phenylalanine--tRNA ligase beta subunit, found in Synechococcus sp. (strain CC9605).